The sequence spans 184 residues: Probable RNA 2'-phosphotransferase (184 aa).

This sequence belongs to the KptA/TPT1 family.

In terms of biological role, removes the 2'-phosphate from RNA via an intermediate in which the phosphate is ADP-ribosylated by NAD followed by a presumed transesterification to release the RNA and generate ADP-ribose 1''-2''-cyclic phosphate (APPR&gt;P). May function as an ADP-ribosylase. The sequence is that of Probable RNA 2'-phosphotransferase from Escherichia coli O8 (strain IAI1).